The chain runs to 94 residues: DNA-directed RNA polymerase subunit omega (94 aa).

It belongs to the RNA polymerase subunit omega family. In terms of assembly, the RNAP catalytic core consists of 2 alpha, 1 beta, 1 beta' and 1 omega subunit. When a sigma factor is associated with the core the holoenzyme is formed, which can initiate transcription.

The catalysed reaction is RNA(n) + a ribonucleoside 5'-triphosphate = RNA(n+1) + diphosphate. Its function is as follows. Promotes RNA polymerase assembly. Latches the N- and C-terminal regions of the beta' subunit thereby facilitating its interaction with the beta and alpha subunits. In Bifidobacterium animalis subsp. lactis (strain AD011), this protein is DNA-directed RNA polymerase subunit omega.